The following is a 163-amino-acid chain: Ribonuclease P protein subunit p25-like protein (163 aa).

2 disordered regions span residues 1-24 and 126-163; these read MEQY…LPPD and LDPS…DTRS. Positions 153-163 are enriched in basic residues; the sequence is RPRRRARDTRS.

The protein belongs to the histone-like Alba family.

Its subcellular location is the nucleus. In terms of biological role, may be a component of ribonuclease P or MRP. The sequence is that of Ribonuclease P protein subunit p25-like protein (Rpp25l) from Mus musculus (Mouse).